Here is a 300-residue protein sequence, read N- to C-terminus: Probable phytol kinase, chloroplastic (300 aa).

A chloroplast-targeting transit peptide spans 1 to 36 (MAAARPALPSSPTSLLLARSTSAPDLAARRPRRWLV). The next 7 helical transmembrane spans lie at 60–78 (LLRD…YSLV), 98–118 (VVHV…SNST), 122–142 (FFAA…GLGF), 168–188 (YVIV…IGIV), 227–247 (FISG…LGYI), 254–274 (ALGK…IPVT), and 276–296 (VVDD…LLFG).

Belongs to the polyprenol kinase family.

The protein resides in the plastid. Its subcellular location is the chloroplast membrane. The enzyme catalyses phytol + CTP = phytyl phosphate + CDP + H(+). It functions in the pathway cofactor biosynthesis; tocopherol biosynthesis. Involved in the activation and reutilization of phytol from chlorophyll degradation in plant metabolism, including tocopherol biosynthesis. Catalyzes the conversion of phytol to phytol monophosphate (PMP). In Triticum aestivum (Wheat), this protein is Probable phytol kinase, chloroplastic.